The sequence spans 901 residues: Aconitate hydratase A (901 aa).

3 residues coordinate [4Fe-4S] cluster: C443, C509, and C512.

The protein belongs to the aconitase/IPM isomerase family. Monomer. [4Fe-4S] cluster serves as cofactor.

The catalysed reaction is citrate = D-threo-isocitrate. It carries out the reaction (2S,3R)-3-hydroxybutane-1,2,3-tricarboxylate = 2-methyl-cis-aconitate + H2O. It functions in the pathway carbohydrate metabolism; tricarboxylic acid cycle; isocitrate from oxaloacetate: step 2/2. It participates in organic acid metabolism; propanoate degradation. Involved in the catabolism of short chain fatty acids (SCFA) via the tricarboxylic acid (TCA)(acetyl degradation route) and probably the 2-methylcitrate cycle I (propionate degradation route). Catalyzes the reversible isomerization of citrate to isocitrate via cis-aconitate. Could catalyze the hydration of 2-methyl-cis-aconitate to yield (2R,3S)-2-methylisocitrate. The apo form of AcnA functions as a RNA-binding regulatory protein. This chain is Aconitate hydratase A (acnA), found in Staphylococcus aureus (strain COL).